A 505-amino-acid polypeptide reads, in one-letter code: Apolipoprotein N-acyltransferase (505 aa).

7 helical membrane-spanning segments follow: residues 6 to 26, 29 to 49, 53 to 73, 80 to 100, 119 to 139, 152 to 172, and 189 to 209; these read PSIL…CLAF, FDIW…ATLV, TAML…VQWV, FGGV…SYLG, FVLA…FTGF, PFAQ…VILL, and TFTK…LQFV. The 247-residue stretch at 223 to 469 folds into the CN hydrolase domain; sequence IQANIEQQLK…TNTLTAEIAT (247 aa). Glu-263 (proton acceptor) is an active-site residue. Lys-328 is an active-site residue. Cys-379 acts as the Nucleophile in catalysis. A helical membrane pass occupies residues 475-495; it reads LFGQFGHWLIYSLSFICVAFG.

This sequence belongs to the CN hydrolase family. Apolipoprotein N-acyltransferase subfamily.

The protein resides in the cell inner membrane. The enzyme catalyses N-terminal S-1,2-diacyl-sn-glyceryl-L-cysteinyl-[lipoprotein] + a glycerophospholipid = N-acyl-S-1,2-diacyl-sn-glyceryl-L-cysteinyl-[lipoprotein] + a 2-acyl-sn-glycero-3-phospholipid + H(+). Its pathway is protein modification; lipoprotein biosynthesis (N-acyl transfer). In terms of biological role, catalyzes the phospholipid dependent N-acylation of the N-terminal cysteine of apolipoprotein, the last step in lipoprotein maturation. The chain is Apolipoprotein N-acyltransferase from Haemophilus ducreyi (strain 35000HP / ATCC 700724).